We begin with the raw amino-acid sequence, 205 residues long: Urease accessory protein UreG (205 aa).

Residue 10–17 (GPVGSGKT) coordinates GTP.

This sequence belongs to the SIMIBI class G3E GTPase family. UreG subfamily. Homodimer. UreD, UreF and UreG form a complex that acts as a GTP-hydrolysis-dependent molecular chaperone, activating the urease apoprotein by helping to assemble the nickel containing metallocenter of UreC. The UreE protein probably delivers the nickel.

It is found in the cytoplasm. In terms of biological role, facilitates the functional incorporation of the urease nickel metallocenter. This process requires GTP hydrolysis, probably effectuated by UreG. The protein is Urease accessory protein UreG of Corynebacterium urealyticum (strain ATCC 43042 / DSM 7109).